The primary structure comprises 500 residues: Protein SLENDER RICE1-LIKE 2 (500 aa).

A GRAS domain is found at 68–454 (KELEKMALRS…QRLYSASAWR (387 aa)). Residues 75 to 135 (LRSVNLMVTC…DALAERLFPA (61 aa)) form a leucine repeat I (LRI) region. The interval 154-219 (FRGFYEAGPY…GGPPFLRITG (66 aa)) is VHIID. Positions 185 to 189 (VHVID) match the VHIID motif. The segment at 233-265 (DVGLRLAEFARSCSVPFAFRGIAADQLDGLRPW) is leucine repeat II (LRII). Positions 275 to 376 (VAINSVLQLH…EAYLQGEIAD (102 aa)) are PFYRE. The short motif at 283–287 (LHRLL) is the LXXLL motif element. The tract at residues 379–454 (SREGSSRVER…QRLYSASAWR (76 aa)) is SAW. The disordered stretch occupies residues 466-500 (SGAADAMEESQNSNTNGGGGGSSGGGHGALNQIMQ). Residues 481–493 (NGGGGGSSGGGHG) show a composition bias toward gly residues.

Belongs to the GRAS family. As to expression, expressed at low levels in leaf blades, leaf sheaths, rachis and flowers. Expressed in the embryo of immature seeds.

The protein resides in the nucleus. Probable transcriptional regulator that acts as a repressor of the gibberellin (GA) signaling pathway. Its repressive activity is weaker than that of SLR1. Its overexpression prevents the GA signaling pathway and induces a dwarf phenotype in Arabidopsis thaliana plants. The polypeptide is Protein SLENDER RICE1-LIKE 2 (Oryza sativa subsp. japonica (Rice)).